We begin with the raw amino-acid sequence, 1121 residues long: MEQVPSAGRLVQITVTEGYDLKGFKGDTPVTFIRAEFNQVVLGDSAKITVSPEGSAKYNFTSSFEFNPEGGITSDDLAHKPVFLTVTEVLPKEKKQKEEKTLILGQAVVDLLPLLEGQSSFQTTVPLHPVQGSPLETPRSSAKQCSLEVKVLVAEPLLTTAQISGGNLLKVTLEAAYSVPESFIPTGPGQNYMVGLQVPSLGEKDYPILFKNGTLKLGGEREPVPRPKKWPIANILAPGANNIPDAFIVGGPYEEEEGELNHPEDSEFRNQAECIKKRIIWDLESRCYLDPSAVVSFQKRIADCRLWPVEITRVPLVTIPKGKAGKTEKTDEEAQLSFHGVAYVNMVPLLYPGVKRIRGAFHVYPYLDSVVHEKTKCLLSLFRDIGHHLIHNNKIGGINSLLSKQAVSKNLKEDKPVKEKDIDGRPRPGDVQAPSIKSQSSDTPLEGEPPLSHNPEGQQYVEAGTYIVLEIQLDKALVPKRMPEELARRVKEMIPPRPPLTRRTGGAQKAMSDYHIQIKNISRAILDEYYRMFGKQVAKLESDMDSETLEEQKCQLSYELNCSGKYFAFKEQLKHAVVKIVRDKYLKTTSFESQEELQTFISELYVFLVDQMHVALNQTMPDDVQGTVATIYTSSEQLQLFAFEAEVNENFEMAAAYYKERLVREPQNLDHWLDYGAFCLLTEDNIKAQECFQKALSLNQSHIHSLLLCGVLAVLLENYEQAEIFFEDATCLEPTNVVAWTLLGLYYEIQNNDIRMEMAFHEASKQLQARMLQAQVTKQKSTGVEDTEERGKRESSLGPWGITNGSATAIKVEAPAGPGAALSILDKFLEESSKLQSDSQEPILTTQTWDPSISQKPSNTFIKEIPTKKEASKCQDSSALLHPGLHYGVSQTTTIFMETIHFLMKVKAVQYVHRVLAHELLCPQGGPSCEYYLVLAQTHILKKNFAKAEEYLQQAAQMDYLNPNVWGLKGHLYFLSGNHSEAKACYERTISFVVDASEMHFIFLRLGLIYLEEKEYEKAKKTYMQACKRSPSCLTWLGLGIACYRLEELTEAEDALSEANALNNYNAEVWAYLALVCLKVGRQLEAEQAYKYMIKLKLKDEALLAEIHTLQETVGFGNPSF.

Basic and acidic residues predominate over residues 410 to 428 (NLKEDKPVKEKDIDGRPRP). The disordered stretch occupies residues 410–457 (NLKEDKPVKEKDIDGRPRPGDVQAPSIKSQSSDTPLEGEPPLSHNPEG). TPR repeat units follow at residues 635–668 (SEQL…EPQN), 669–702 (LDHW…NQSH), and 704–736 (HSLL…EPTN). 2 disordered regions span residues 778-802 (KQKS…PWGI) and 836-858 (QSDS…QKPS). 5 TPR repeats span residues 929–962 (CEYY…DYLN), 963–996 (PNVW…VVDA), 1000–1033 (HFIF…SPSC), 1035–1066 (TWLG…NNYN), and 1068–1100 (EVWA…KLKD).

Belongs to the CFAP70 family. Expressed in testis.

The protein localises to the cell projection. It is found in the cilium. The protein resides in the flagellum. It localises to the cytoplasm. Its subcellular location is the cytoskeleton. The protein localises to the flagellum basal body. It is found in the cilium axoneme. Its function is as follows. Axoneme-binding protein that plays a role in the regulation of ciliary motility and cilium length. In Homo sapiens (Human), this protein is Cilia- and flagella-associated protein 70.